The following is a 526-amino-acid chain: Trigger factor (526 aa).

A PPIase FKBP-type domain is found at 162–243 (GDFVSIDLSA…LGSVKERELP (82 aa)). Residues 425 to 460 (DTDGADVDPKEYFGDVEAEGDKADKAETDKAEEKPK) are compositionally biased toward basic and acidic residues. A disordered region spans residues 425–526 (DTDGADVDPK…AKKAAEKKED (102 aa)). Residues 461–517 (KAPAKKSTTKKSTAKKSTAKKSTAKKSTAKKSTAKKSTTKKATKSTAKKSTAKKTTA) show a composition bias toward basic residues.

The protein belongs to the FKBP-type PPIase family. Tig subfamily.

The protein resides in the cytoplasm. It catalyses the reaction [protein]-peptidylproline (omega=180) = [protein]-peptidylproline (omega=0). Its function is as follows. Involved in protein export. Acts as a chaperone by maintaining the newly synthesized protein in an open conformation. Functions as a peptidyl-prolyl cis-trans isomerase. The sequence is that of Trigger factor from Corynebacterium jeikeium (strain K411).